The sequence spans 528 residues: Linear primary-alkylsulfatase (528 aa).

Zn(2+) contacts are provided by His42, His44, Asp46, His47, Glu151, and Glu170. Sulfate-binding positions include 179 to 184 (NVHTLR) and Arg189. His213 is a Zn(2+) binding site. Tyr275 provides a ligand contact to sulfate.

The protein belongs to the metallo-beta-lactamase superfamily. Type III sulfatase family. Zn(2+) serves as cofactor.

The enzyme catalyses a primary linear alkyl sulfate ester + H2O = a primary alcohol + sulfate + H(+). Functionally, alkylsulfatase that cleaves the widely used detergent sodium dodecyl sulfate (SDS), which allows the bacterium to use SDS as a sole carbon or sulfur source. The protein is Linear primary-alkylsulfatase of Pseudomonas sp. (strain ATCC 19151).